Here is a 132-residue protein sequence, read N- to C-terminus: Small ribosomal subunit protein uS8 (132 aa).

This sequence belongs to the universal ribosomal protein uS8 family. In terms of assembly, part of the 30S ribosomal subunit. Contacts proteins S5 and S12.

One of the primary rRNA binding proteins, it binds directly to 16S rRNA central domain where it helps coordinate assembly of the platform of the 30S subunit. This chain is Small ribosomal subunit protein uS8, found in Baumannia cicadellinicola subsp. Homalodisca coagulata.